We begin with the raw amino-acid sequence, 426 residues long: Vitamin D3 receptor (426 aa).

The segment at residues 21–96 (PRICGVCGDR…IGMMKEFILT (76 aa)) is a DNA-binding region (nuclear receptor). 8 residues coordinate Zn(2+): cysteine 24, cysteine 27, cysteine 41, cysteine 44, cysteine 60, cysteine 66, cysteine 76, and cysteine 79. 2 NR C4-type zinc fingers span residues 24 to 44 (CGVC…CEGC) and 60 to 84 (CPFN…LKRC). The interval 97-126 (DEEVQRKREMILKRKEEEALKDSLRPKLSE) is hinge. One can recognise an NR LBD domain in the interval 127–422 (EQQRIITTLL…LTPLLFEVFG (296 aa)). Tyrosine 143 contacts calcitriol. The segment at 147–215 (YSDFSQFRPP…NEEDSDDPSV (69 aa)) is disordered. The segment covering 175–191 (SFSGNSSSSCSDHCTSS) has biased composition (low complexity). The segment covering 192-204 (PDTMEPTSFSNQD) has biased composition (polar residues). Calcitriol is bound at residue serine 235. Residues 244 to 262 (KMIPGFRDLTPEDQIVLLK) are interaction with coactivator LXXLL motif. Arginine 272, serine 276, histidine 304, and histidine 396 together coordinate calcitriol. The short motif at 415-423 (PLLFEVFGN) is the 9aaTAD element.

This sequence belongs to the nuclear hormone receptor family. NR1 subfamily. Homodimer in the absence of bound vitamin D3. Heterodimer with RXRA after vitamin D3 binding. Interacts with MED1, NCOA1, NCOA2, NCOA3 and NCOA6 coactivators, leading to a strong increase of transcription of target genes. Interacts with the corepressor NCOR1. Interacts with SNW1. Interacts with IRX4, the interaction does not affect its transactivation activity. Interacts with CRY1. Interacts with CRY2 in a ligand-dependent manner. Post-translationally, ubiquitinated by UBR5, leading to its degradation: UBR5 specifically recognizes and binds ligand-bound VDR when it is not associated with coactivators (NCOAs). In presence of NCOAs, the UBR5-degron is not accessible, preventing its ubiquitination and degradation. In terms of tissue distribution, mammary gland, expression increases during lactation. Also found in colon, expression is down-regulated at parturition.

The protein resides in the nucleus. The protein localises to the cytoplasm. Functionally, nuclear receptor for calcitriol, the active form of vitamin D3 which mediates the action of this vitamin on cells. Enters the nucleus upon vitamin D3 binding where it forms heterodimers with the retinoid X receptor/RXR. The VDR-RXR heterodimers bind to specific response elements on DNA and activate the transcription of vitamin D3-responsive target genes. Plays a central role in calcium homeostasis. Also functions as a receptor for the secondary bile acid lithocholic acid (LCA) and its metabolites. This is Vitamin D3 receptor (VDR) from Bos taurus (Bovine).